The chain runs to 339 residues: Nicotinate-nucleotide--dimethylbenzimidazole phosphoribosyltransferase (339 aa).

Residue Glu306 is the Proton acceptor of the active site.

It belongs to the CobT family.

It carries out the reaction 5,6-dimethylbenzimidazole + nicotinate beta-D-ribonucleotide = alpha-ribazole 5'-phosphate + nicotinate + H(+). The protein operates within nucleoside biosynthesis; alpha-ribazole biosynthesis; alpha-ribazole from 5,6-dimethylbenzimidazole: step 1/2. Catalyzes the synthesis of alpha-ribazole-5'-phosphate from nicotinate mononucleotide (NAMN) and 5,6-dimethylbenzimidazole (DMB). The polypeptide is Nicotinate-nucleotide--dimethylbenzimidazole phosphoribosyltransferase (Brucella melitensis biotype 1 (strain ATCC 23456 / CCUG 17765 / NCTC 10094 / 16M)).